Here is a 922-residue protein sequence, read N- to C-terminus: Cell cycle and apoptosis regulator protein 2 (922 aa).

The tract at residues 1 to 39 (MSQFKRQRINPLPGGRNFSGAASTSLLGPPPGLLTPPVA) is disordered. The residue at position 35 (threonine 35) is a Phosphothreonine. At lysine 112 the chain carries N6-acetyllysine; by KAT8. Lysine 123 is subject to N6-methyllysine. Serine 124 bears the Phosphoserine mark. Disordered stretches follow at residues 178 to 219 (LNRF…KPRH), 280 to 307 (RIQV…PTYS), 446 to 508 (KATE…EPAV), and 567 to 638 (VSPP…RGEA). Arginine 180 carries the omega-N-methylarginine modification. Over residues 188–200 (GRLDQGRSDDYDS) the composition is skewed to basic and acidic residues. Residue lysine 215 is modified to N6-acetyllysine; by KAT8. Positions 473-491 (QADTSKQNTETMEATTQQD) are enriched in polar residues. Threonine 483 is modified (phosphothreonine). Serine 568 is subject to Phosphoserine. Residues 571 to 601 (EPEKEEAAKEDAVKEEEAVKEEAVKVSKDEV) are compositionally biased toward basic and acidic residues. Residues 573–596 (EKEEAAKEDAVKEEEAVKEEAVKV) are a coiled coil. Lysine 590 is covalently cross-linked (Glycyl lysine isopeptide (Lys-Gly) (interchain with G-Cter in SUMO2 and SUMO3); alternate). Lysine 590 is covalently cross-linked (Glycyl lysine isopeptide (Lys-Gly) (interchain with G-Cter in SUMO2); alternate). Residues 609 to 669 (ESDSPLKEDG…DEFAGAKLEE (61 aa)) are interaction with MCC. Residues serine 612, serine 626, serine 674, serine 677, and serine 680 each carry the phosphoserine modification. Tyrosine 684 carries the post-translational modification Phosphotyrosine. Serine 686 and serine 807 each carry phosphoserine. The interval 703-922 (DCLLAFVFFD…VEKEEPTPSN (220 aa)) is interaction with NR1D1. Residues 828-898 (LENKIHTLEL…QDFRRRLTPL (71 aa)) adopt a coiled-coil conformation. At threonine 896 the chain carries Phosphothreonine.

In terms of assembly, component of the DBIRD complex. Interacts with ZNF326/ZIRD; the interaction is direct. Interacts (via N-terminus) with SIRT1, which inhibits the deacetylation of substrates. Interacts (via N-terminus) with SUV39H1; this interaction abolishes the interaction with SIRT1. Component of a nuclear receptor-mediated transcription complex composed of at least ZNF335, CCAR2 and EMSY; the complex stimulates the transcription of nuclear receptor target genes such as SOX9 and HOXA1. Within the complex interacts with EMSY and interacts with ZNF335 (via C-terminus). Components of this complex may associate with components of a histone methylation complex to form a complex at least composed of ZNF335, HCFC1, CCAR2, EMSY, MKI67, RBBP5, ASH2L and WDR5. Within this complex, interacts with ASH2L. Interacts with NR1D1. Interacts (via N-terminus) with ESR1 and ESR2. Interacts (via N-terminus) with HDAC3 (via C-terminus). Interacts with HDAC1 and MED2F. Interacts with MCC. Interacts (via N-terminus) with NR1H2 and NR1H3 in a ligand-independent manner. Interacts with CSNK2A1. Interacts (via N-terminus) with p53/TP53. Interacts (via N-terminus) with BRCA1 (via the BRCT domains). Interacts (via N-terminus) with CHEK2 (via protein kinase domain). Interacts with PSEM3. Interacts (via N-terminus) with PSIA3 and SENP1. The sumoylated form shows a preferential interaction with SIRT1 as compared to its unmodified form. Interacts with CECR2; may form part of the CERF-1 and/or CEF-5 ISWI chromatin remodeling complexes in embryonic stem cells. Post-translationally, acetylation at Lys-112 and Lys-215 by KAT8 prevents inhibitory binding to SIRT1 and increases its deacetylase activity. In terms of processing, genotoxic stress induces its sumoylation and sumoylation promotes the SIRT1-CCAR2 interaction which in turn inhibits SIRT1-mediated deacetylation of p53/TP53. Sumoylation leads to transcriptional activation of p53/TP53 by sequestering SIRT1 from p53/TP53. Desumoylated by SENP1.

It localises to the nucleus. The protein localises to the cytoplasm. It is found in the cytoskeleton. The protein resides in the spindle. Core component of the DBIRD complex, a multiprotein complex that acts at the interface between core mRNP particles and RNA polymerase II (RNAPII) and integrates transcript elongation with the regulation of alternative splicing: the DBIRD complex affects local transcript elongation rates and alternative splicing of a large set of exons embedded in (A + T)-rich DNA regions. Inhibits SIRT1 deacetylase activity leading to increasing levels of p53/TP53 acetylation and p53-mediated apoptosis. Inhibits SUV39H1 methyltransferase activity. Mediates ligand-dependent transcriptional activation by nuclear hormone receptors. Plays a critical role in maintaining genomic stability and cellular integrity following UV-induced genotoxic stress. Regulates the circadian expression of the core clock components NR1D1 and BMAL1. Enhances the transcriptional repressor activity of NR1D1 through stabilization of NR1D1 protein levels by preventing its ubiquitination and subsequent degradation. Represses the ligand-dependent transcriptional activation function of ESR2. Acts as a regulator of PCK1 expression and gluconeogenesis by a mechanism that involves, at least in part, both NR1D1 and SIRT1. Negatively regulates the deacetylase activity of HDAC3 and can alter its subcellular localization. Positively regulates the beta-catenin pathway (canonical Wnt signaling pathway) and is required for MCC-mediated repression of the beta-catenin pathway. Represses ligand-dependent transcriptional activation function of NR1H2 and NR1H3 and inhibits the interaction of SIRT1 with NR1H3. Plays an important role in tumor suppression through p53/TP53 regulation; stabilizes p53/TP53 by affecting its interaction with ubiquitin ligase MDM2. Represses the transcriptional activator activity of BRCA1. Inhibits SIRT1 in a CHEK2 and PSEM3-dependent manner and inhibits the activity of CHEK2 in vitro. This Mus musculus (Mouse) protein is Cell cycle and apoptosis regulator protein 2 (Ccar2).